The chain runs to 363 residues: Caffeic acid 3-O-methyltransferase (363 aa).

130-136 contacts substrate; that stretch reads MNQDKVL. The substrate binding stretch occupies residues 162–180; that stretch reads AFEYHGKDPRFNKVFNQGM. Glycine 208, aspartate 231, aspartate 251, methionine 252, and lysine 265 together coordinate S-adenosyl-L-methionine. Histidine 269 serves as the catalytic Proton acceptor.

The protein belongs to the class I-like SAM-binding methyltransferase superfamily. Cation-independent O-methyltransferase family. COMT subfamily. In terms of assembly, homodimer.

The catalysed reaction is (E)-caffeate + S-adenosyl-L-methionine = (E)-ferulate + S-adenosyl-L-homocysteine + H(+). Its pathway is aromatic compound metabolism; phenylpropanoid biosynthesis. Catalyzes the conversion of caffeic acid to ferulic acid and of 5-hydroxyferulic acid to sinapic acid. The resulting products may subsequently be converted to the corresponding alcohols that are incorporated into lignins. The sequence is that of Caffeic acid 3-O-methyltransferase (COMT1) from Catharanthus roseus (Madagascar periwinkle).